The sequence spans 403 residues: S-adenosylmethionine synthase (403 aa).

Position 14 (His-14) interacts with ATP. Asp-16 contributes to the Mg(2+) binding site. Residue Glu-42 coordinates K(+). L-methionine contacts are provided by Glu-55 and Gln-99. The tract at residues 99-109 is flexible loop; that stretch reads QSPEIAEGVDH. Residues 180–182, 250–251, Asp-259, 265–266, Ala-282, and Lys-286 contribute to the ATP site; these read DAK, RF, and RK. Residue Asp-259 participates in L-methionine binding. Lys-290 provides a ligand contact to L-methionine.

The protein belongs to the AdoMet synthase family. Homotetramer; dimer of dimers. The cofactor is Mg(2+). Requires K(+) as cofactor.

It localises to the cytoplasm. The catalysed reaction is L-methionine + ATP + H2O = S-adenosyl-L-methionine + phosphate + diphosphate. The protein operates within amino-acid biosynthesis; S-adenosyl-L-methionine biosynthesis; S-adenosyl-L-methionine from L-methionine: step 1/1. In terms of biological role, catalyzes the formation of S-adenosylmethionine (AdoMet) from methionine and ATP. The overall synthetic reaction is composed of two sequential steps, AdoMet formation and the subsequent tripolyphosphate hydrolysis which occurs prior to release of AdoMet from the enzyme. In Deinococcus deserti (strain DSM 17065 / CIP 109153 / LMG 22923 / VCD115), this protein is S-adenosylmethionine synthase.